A 554-amino-acid chain; its full sequence is Dihydroxy-acid dehydratase (554 aa).

Cys-51 is a [2Fe-2S] cluster binding site. Mg(2+) is bound at residue Asp-83. [2Fe-2S] cluster is bound at residue Cys-124. Positions 125 and 126 each coordinate Mg(2+). An N6-carboxylysine modification is found at Lys-126. Cys-193 contributes to the [2Fe-2S] cluster binding site. Glu-444 contributes to the Mg(2+) binding site. Residue Ser-470 is the Proton acceptor of the active site.

The protein belongs to the IlvD/Edd family. In terms of assembly, homodimer. [2Fe-2S] cluster is required as a cofactor. Requires Mg(2+) as cofactor.

The catalysed reaction is (2R)-2,3-dihydroxy-3-methylbutanoate = 3-methyl-2-oxobutanoate + H2O. It catalyses the reaction (2R,3R)-2,3-dihydroxy-3-methylpentanoate = (S)-3-methyl-2-oxopentanoate + H2O. It participates in amino-acid biosynthesis; L-isoleucine biosynthesis; L-isoleucine from 2-oxobutanoate: step 3/4. The protein operates within amino-acid biosynthesis; L-valine biosynthesis; L-valine from pyruvate: step 3/4. Functions in the biosynthesis of branched-chain amino acids. Catalyzes the dehydration of (2R,3R)-2,3-dihydroxy-3-methylpentanoate (2,3-dihydroxy-3-methylvalerate) into 2-oxo-3-methylpentanoate (2-oxo-3-methylvalerate) and of (2R)-2,3-dihydroxy-3-methylbutanoate (2,3-dihydroxyisovalerate) into 2-oxo-3-methylbutanoate (2-oxoisovalerate), the penultimate precursor to L-isoleucine and L-valine, respectively. The sequence is that of Dihydroxy-acid dehydratase from Vesicomyosocius okutanii subsp. Calyptogena okutanii (strain HA).